Here is a 423-residue protein sequence, read N- to C-terminus: Kynurenine--oxoglutarate transaminase 1 (423 aa).

Position 36 (Gly36) interacts with substrate. At Lys82 the chain carries N6-succinyllysine. Asn185 lines the substrate pocket. Lys247 is modified (N6-(pyridoxal phosphate)lysine). Arg398 provides a ligand contact to substrate.

This sequence belongs to the class-I pyridoxal-phosphate-dependent aminotransferase family. Homodimer. Pyridoxal 5'-phosphate is required as a cofactor. As to expression, detected in kidney.

Its subcellular location is the cytoplasm. It is found in the cytosol. The protein localises to the mitochondrion matrix. It catalyses the reaction L-kynurenine + 2-oxoglutarate = kynurenate + L-glutamate + H2O. It carries out the reaction 3-phenylpyruvate + L-glutamine = 2-oxoglutaramate + L-phenylalanine. The enzyme catalyses an S-substituted L-cysteine + H2O = a thiol + pyruvate + NH4(+). Its pathway is amino-acid degradation; L-kynurenine degradation; kynurenate from L-kynurenine: step 1/2. With respect to regulation, inhibited by aminooxyacetate (in vitro). Catalyzes the irreversible transamination of the L-tryptophan metabolite L-kynurenine to form kynurenic acid (KA), an intermediate in the tryptophan catabolic pathway which is also a broad spectrum antagonist of the three ionotropic excitatory amino acid receptors among others. Metabolizes the cysteine conjugates of certain halogenated alkenes and alkanes to form reactive metabolites. Catalyzes the beta-elimination of S-conjugates and Se-conjugates of L-(seleno)cysteine, resulting in the cleavage of the C-S or C-Se bond. The sequence is that of Kynurenine--oxoglutarate transaminase 1 from Rattus norvegicus (Rat).